The sequence spans 145 residues: Nickel-responsive regulator (145 aa).

Positions 77, 88, 90, and 96 each coordinate Ni(2+).

The protein belongs to the transcriptional regulatory CopG/NikR family. Homotetramer. It depends on Ni(2+) as a cofactor.

Transcriptional repressor of the nikABCDE operon. Is active in the presence of excessive concentrations of intracellular nickel. The chain is Nickel-responsive regulator from Edwardsiella ictaluri (strain 93-146).